Here is a 101-residue protein sequence, read N- to C-terminus: MKDMMGLLKQAQAMQAKVQDMQAALEQITVEGHAGGGLVKITLTVKGQIRSVSIDPSLLKPEEKEIVEDLVALAYENARHQAEQIMEEKMREVTGGMQLPF.

The protein belongs to the YbaB/EbfC family. As to quaternary structure, homodimer.

It localises to the cytoplasm. The protein localises to the nucleoid. Its function is as follows. Binds to DNA and alters its conformation. May be involved in regulation of gene expression, nucleoid organization and DNA protection. This Beijerinckia indica subsp. indica (strain ATCC 9039 / DSM 1715 / NCIMB 8712) protein is Nucleoid-associated protein Bind_0255.